The sequence spans 527 residues: Pentatricopeptide repeat-containing protein At5g41170, mitochondrial (527 aa).

A mitochondrion-targeting transit peptide spans 1–35; sequence MAMRFFQLHRNRLVKGNSGKALSFSRLLDLSFWVR. PPR repeat units lie at residues 36-70, 71-105, 106-140, 141-175, 176-210, 211-245, 246-280, 281-315, 316-350, 351-385, 386-420, 424-458, 459-493, and 494-527; these read AFCN…RPLP, SIID…GVSH, DLYT…GFEP, DIVT…GIKP, DVVM…GIRP, DVVM…KIKP, DVIT…SIAP, NIFT…GCFP, DVVA…GLTG, NTIT…GVPP, NIRT…EMDG, NIWT…EMDI, GIIT…GVKP, and NVVT…DGVS.

The protein belongs to the PPR family. P subfamily.

Its subcellular location is the mitochondrion. This chain is Pentatricopeptide repeat-containing protein At5g41170, mitochondrial, found in Arabidopsis thaliana (Mouse-ear cress).